The following is a 245-amino-acid chain: Probable inactive carboxylesterase Os04g0669700 (245 aa).

Residues Ser-115 and His-201 each act as charge relay system in the active site.

This sequence belongs to the AB hydrolase superfamily. AB hydrolase 2 family.

This is Probable inactive carboxylesterase Os04g0669700 from Oryza sativa subsp. japonica (Rice).